The chain runs to 245 residues: Probable transcriptional regulatory protein pc1328 (245 aa).

This sequence belongs to the TACO1 family.

The protein localises to the cytoplasm. This chain is Probable transcriptional regulatory protein pc1328, found in Protochlamydia amoebophila (strain UWE25).